Reading from the N-terminus, the 141-residue chain is Large ribosomal subunit protein uL11c (141 aa).

This sequence belongs to the universal ribosomal protein uL11 family. As to quaternary structure, part of the ribosomal stalk of the 50S ribosomal subunit. Interacts with L10 and the large rRNA to form the base of the stalk. L10 forms an elongated spine to which L12 dimers bind in a sequential fashion forming a multimeric L10(L12)X complex.

It localises to the plastid. The protein resides in the chloroplast. Forms part of the ribosomal stalk which helps the ribosome interact with GTP-bound translation factors. This Cyanidium caldarium (Red alga) protein is Large ribosomal subunit protein uL11c.